A 49-amino-acid chain; its full sequence is Large ribosomal subunit protein bL33A (49 aa).

The protein belongs to the bacterial ribosomal protein bL33 family.

This is Large ribosomal subunit protein bL33A from Leuconostoc mesenteroides subsp. mesenteroides (strain ATCC 8293 / DSM 20343 / BCRC 11652 / CCM 1803 / JCM 6124 / NCDO 523 / NBRC 100496 / NCIMB 8023 / NCTC 12954 / NRRL B-1118 / 37Y).